Here is a 453-residue protein sequence, read N- to C-terminus: Zinc finger protein Pegasus (453 aa).

3 C2H2-type zinc fingers span residues 101–123 (LKCRYCNYASKGTARLIEHIRIH), 129–151 (HRCHLCPFASAYERHLEAHMRSH), and 157–180 (YKCELCSFRCSDRSNLSHHRRRKH). Residues 279-293 (GQLSSLPPDTQNPAS) are compositionally biased toward polar residues. The tract at residues 279 to 375 (GQLSSLPPDT…QPSTPAPALP (97 aa)) is disordered. Positions 315 to 332 (CSSAVSTSVAQSSSPASP) are enriched in low complexity. Over residues 356 to 368 (RTSTPSISNSQPS) the composition is skewed to polar residues. C2H2-type zinc fingers lie at residues 383–405 (HHCQHCDMYFADNILYTIHMGCH) and 411–438 (FQCNICGCKCKNKYDFACHFARGACCQH).

It belongs to the Ikaros C2H2-type zinc-finger protein family. In terms of assembly, probably self-associates.

It is found in the nucleus. In terms of biological role, transcriptional repressor that binds the core 5'GNNTGTNG-3' DNA consensus sequence. The polypeptide is Zinc finger protein Pegasus (ikzf5) (Xenopus laevis (African clawed frog)).